A 688-amino-acid polypeptide reads, in one-letter code: Protein sel-1 homolog 2 (688 aa).

The N-terminal stretch at 1-18 (MNPLALLVEILIIIEVTT) is a signal peptide. Topologically, residues 19–662 (KNSEAERYNR…KWKWLKLDST (644 aa)) are extracellular. N-linked (GlcNAc...) asparagine glycosylation occurs at N34. 11 Sel1-like repeats span residues 107–142 (GDEL…DMGN), 143–178 (LKAM…KEGS), 179–214 (YKAQ…AGGS), 215–250 (MMSQ…DYIA), 297–333 (VQIQ…KAGS), 334–370 (ANAM…SKGN), 371–406 (AIGL…EKGW), 407–442 (PNAQ…QSGQ), 443–478 (PLAI…ELGH), 551–586 (AFAR…DKHH), and 588–623 (AQAM…QTSP). N162 carries N-linked (GlcNAc...) asparagine glycosylation. The chain crosses the membrane as a helical span at residues 663–683 (IGPYWDLLVIGLIVVVLIFLL). Over 684-688 (RNHHR) the chain is Cytoplasmic.

It belongs to the sel-1 family.

Its subcellular location is the membrane. The protein localises to the cell projection. It localises to the cilium. The protein resides in the nucleus speckle. This is Protein sel-1 homolog 2 (Sel1l2) from Rattus norvegicus (Rat).